A 342-amino-acid chain; its full sequence is N-acetyl-gamma-glutamyl-phosphate reductase (342 aa).

Cys149 is an active-site residue.

This sequence belongs to the NAGSA dehydrogenase family. Type 1 subfamily.

The protein localises to the cytoplasm. The catalysed reaction is N-acetyl-L-glutamate 5-semialdehyde + phosphate + NADP(+) = N-acetyl-L-glutamyl 5-phosphate + NADPH + H(+). It functions in the pathway amino-acid biosynthesis; L-arginine biosynthesis; N(2)-acetyl-L-ornithine from L-glutamate: step 3/4. Catalyzes the NADPH-dependent reduction of N-acetyl-5-glutamyl phosphate to yield N-acetyl-L-glutamate 5-semialdehyde. The chain is N-acetyl-gamma-glutamyl-phosphate reductase from Cereibacter sphaeroides (strain ATCC 17029 / ATH 2.4.9) (Rhodobacter sphaeroides).